We begin with the raw amino-acid sequence, 424 residues long: Trigger factor (424 aa).

The PPIase FKBP-type domain occupies 163 to 248 (GDTVVLDFEG…IHEIKAKELP (86 aa)).

The protein belongs to the FKBP-type PPIase family. Tig subfamily.

It is found in the cytoplasm. It carries out the reaction [protein]-peptidylproline (omega=180) = [protein]-peptidylproline (omega=0). Involved in protein export. Acts as a chaperone by maintaining the newly synthesized protein in an open conformation. Functions as a peptidyl-prolyl cis-trans isomerase. This Bacillus licheniformis (strain ATCC 14580 / DSM 13 / JCM 2505 / CCUG 7422 / NBRC 12200 / NCIMB 9375 / NCTC 10341 / NRRL NRS-1264 / Gibson 46) protein is Trigger factor.